A 1304-amino-acid chain; its full sequence is Myosin-1 (1304 aa).

Residues Met1–Asn12 are compositionally biased toward basic residues. The interval Met1 to Lys24 is disordered. One can recognise a Myosin motor domain in the interval Val36–Asp730. ATP is bound at residue Gly129 to Thr136. Ser364 carries the phosphoserine modification. Residues Ser413–Ser496 are actin-binding. IQ domains are found at residues His734–Ala754 and Ala755–Gly780. Positions Arg788–Gly978 constitute a TH1 domain. Disordered stretches follow at residues Asp963 to Ala1162 and Glu1214 to Trp1304. Polar residues-rich tracts occupy residues Ser964 to Pro983 and Arg1001 to Gln1012. 3 stretches are compositionally biased toward low complexity: residues Gln1029–Gln1052, Gln1072–Gln1096, and Pro1120–Val1140. Residues Ala1141 to Lys1156 are compositionally biased toward pro residues. The SH3 domain occupies Pro1155 to Pro1217. Low complexity-rich tracts occupy residues Pro1217–Lys1227 and Leu1236–Gly1256. Residues Asp1292–Trp1304 show a composition bias toward acidic residues.

Belongs to the TRAFAC class myosin-kinesin ATPase superfamily. Myosin family. In terms of processing, phosphorylation of the TEDS site (Ser-364) is required for the polarization of the actin cytoskeleton. Phosphorylation probably activates the myosin-I ATPase activity.

It localises to the cytoplasm. The protein resides in the cytoskeleton. Its subcellular location is the actin patch. Functionally, type-I myosin implicated in the organization of the actin cytoskeleton. Required for proper actin cytoskeleton polarization. At the cell cortex, assembles in patch-like structures together with proteins from the actin-polymerizing machinery and promotes actin assembly. Functions as actin nucleation-promoting factor (NPF) for the Arp2/3 complex. In Debaryomyces hansenii (strain ATCC 36239 / CBS 767 / BCRC 21394 / JCM 1990 / NBRC 0083 / IGC 2968) (Yeast), this protein is Myosin-1 (MYO1).